A 110-amino-acid chain; its full sequence is uncharacterized protein (110 aa).

Residues 1 to 16 show a composition bias toward basic and acidic residues; it reads MSVKLKYDKIDQRNGD. 2 disordered regions span residues 1-29 and 73-100; these read MSVK…GNGN and IKQQ…ESPN. The segment covering 20–29 has biased composition (low complexity); it reads GNHNNCGNGN.

This is an uncharacterized protein from Dictyostelium discoideum (Social amoeba).